The primary structure comprises 271 residues: MNEAGTPINPIAFQLGPLSVHWYGIIIGAGALLGLWMAMRESEKRGLKKDIFIDLVLFAIPIAIICARAYYVLFEWSYYSEHPGEIIKIWKGGIAIHGGLIGAIATGIVFSKVRGISFWKLADIAAPSILLGQAIGRWGNFINQEAHGEAVSRSFLESLHLPDFIINQMYIDGQYYHPTFLYESLWSFAGVVILLLLRRVNLRRGNLFLTYVIWYSIGRYFIEGMRTDSLMLTSQLRIAQVISIVLIVLAIILMIFRRMKGYADKRYADTD.

4 helical membrane-spanning segments follow: residues 18 to 38, 51 to 71, 89 to 109, and 115 to 135; these read LSVH…LWMA, IFID…RAYY, IWKG…TGIV, and GISF…GQAI. Arg-137 lines the a 1,2-diacyl-sn-glycero-3-phospho-(1'-sn-glycerol) pocket. 3 consecutive transmembrane segments (helical) span residues 177 to 197, 205 to 225, and 236 to 256; these read HPTF…LLLL, GNLF…IEGM, and LRIA…LMIF.

Belongs to the Lgt family.

The protein localises to the cell membrane. It carries out the reaction L-cysteinyl-[prolipoprotein] + a 1,2-diacyl-sn-glycero-3-phospho-(1'-sn-glycerol) = an S-1,2-diacyl-sn-glyceryl-L-cysteinyl-[prolipoprotein] + sn-glycerol 1-phosphate + H(+). It functions in the pathway protein modification; lipoprotein biosynthesis (diacylglyceryl transfer). Its function is as follows. Catalyzes the transfer of the diacylglyceryl group from phosphatidylglycerol to the sulfhydryl group of the N-terminal cysteine of a prolipoprotein, the first step in the formation of mature lipoproteins. The protein is Phosphatidylglycerol--prolipoprotein diacylglyceryl transferase of Bacillus velezensis (strain DSM 23117 / BGSC 10A6 / LMG 26770 / FZB42) (Bacillus amyloliquefaciens subsp. plantarum).